The sequence spans 178 residues: MARLKSLYNDQYKQQIKDELGLENVMQVPKITKITLNMGVGGASQDKKLLEGAVADMTAIAGQKPVITKARKSVAGFKIREEWPIGCKVTLRGEQMYEFLDRLIAIAIPRIRDFRGFSPKAFDGRGNYSLGIKEQIVFPEVDYDKIDRLRGLDITITTSAQDDEQGRALLKAFGFPFK.

This sequence belongs to the universal ribosomal protein uL5 family. As to quaternary structure, part of the 50S ribosomal subunit; part of the 5S rRNA/L5/L18/L25 subcomplex. Contacts the 5S rRNA and the P site tRNA. Forms a bridge to the 30S subunit in the 70S ribosome.

Its function is as follows. This is one of the proteins that bind and probably mediate the attachment of the 5S RNA into the large ribosomal subunit, where it forms part of the central protuberance. In the 70S ribosome it contacts protein S13 of the 30S subunit (bridge B1b), connecting the 2 subunits; this bridge is implicated in subunit movement. Contacts the P site tRNA; the 5S rRNA and some of its associated proteins might help stabilize positioning of ribosome-bound tRNAs. This Psychrobacter sp. (strain PRwf-1) protein is Large ribosomal subunit protein uL5.